Consider the following 209-residue polypeptide: Putative 3-methyladenine DNA glycosylase (209 aa).

Residues 189–209 (YISKTQPGPPPKKRKKGLESS) form a disordered region. A compositionally biased stretch (basic residues) spans 199-209 (PKKRKKGLESS).

Belongs to the DNA glycosylase MPG family.

This is Putative 3-methyladenine DNA glycosylase from Chlorobaculum tepidum (strain ATCC 49652 / DSM 12025 / NBRC 103806 / TLS) (Chlorobium tepidum).